A 196-amino-acid polypeptide reads, in one-letter code: uncharacterized protein (196 aa).

It belongs to the NAD(P)H dehydrogenase (quinone) family.

This is an uncharacterized protein from Escherichia coli (strain K12).